We begin with the raw amino-acid sequence, 441 residues long: 5-methylthioadenosine/S-adenosylhomocysteine deaminase (441 aa).

Histidine 70 and histidine 72 together coordinate Zn(2+). Substrate contacts are provided by glutamate 99 and histidine 191. Zn(2+) is bound at residue histidine 218. Positions 221 and 306 each coordinate substrate. Aspartate 306 contacts Zn(2+).

The protein belongs to the metallo-dependent hydrolases superfamily. MTA/SAH deaminase family. Zn(2+) serves as cofactor.

The enzyme catalyses S-adenosyl-L-homocysteine + H2O + H(+) = S-inosyl-L-homocysteine + NH4(+). It catalyses the reaction S-methyl-5'-thioadenosine + H2O + H(+) = S-methyl-5'-thioinosine + NH4(+). Catalyzes the deamination of 5-methylthioadenosine and S-adenosyl-L-homocysteine into 5-methylthioinosine and S-inosyl-L-homocysteine, respectively. Is also able to deaminate adenosine. The polypeptide is 5-methylthioadenosine/S-adenosylhomocysteine deaminase (Lawsonia intracellularis (strain PHE/MN1-00)).